A 213-amino-acid chain; its full sequence is tRNA (guanine-N(7)-)-methyltransferase (213 aa).

S-adenosyl-L-methionine is bound by residues D44, E69, N96, and D119. Residue D119 is part of the active site. The substrate site is built by K123 and D155.

Belongs to the class I-like SAM-binding methyltransferase superfamily. TrmB family.

It carries out the reaction guanosine(46) in tRNA + S-adenosyl-L-methionine = N(7)-methylguanosine(46) in tRNA + S-adenosyl-L-homocysteine. It participates in tRNA modification; N(7)-methylguanine-tRNA biosynthesis. In terms of biological role, catalyzes the formation of N(7)-methylguanine at position 46 (m7G46) in tRNA. The sequence is that of tRNA (guanine-N(7)-)-methyltransferase from Thermosynechococcus vestitus (strain NIES-2133 / IAM M-273 / BP-1).